A 297-amino-acid polypeptide reads, in one-letter code: Calponin-1 (297 aa).

The 104-residue stretch at His28–Ala131 folds into the Calponin-homology (CH) domain. Calponin-like repeat units lie at residues Ile164–Tyr189, Ile204–Phe229, and Val243–Tyr268. Thr170 is subject to Phosphothreonine; by ROCK2. A Phosphoserine; by ROCK2 modification is found at Ser175. 2 positions are modified to phosphothreonine; by ROCK2: Thr180 and Thr184. Position 259 is a phosphothreonine; by ROCK2 (Thr259).

It belongs to the calponin family. As to quaternary structure, part of cGMP kinase signaling complex at least composed of ACTA2/alpha-actin, CNN1/calponin H1, PLN/phospholamban, PRKG1 and ITPR1.

Its function is as follows. Thin filament-associated protein that is implicated in the regulation and modulation of smooth muscle contraction. It is capable of binding to actin, calmodulin and tropomyosin. The interaction of calponin with actin inhibits the actomyosin Mg-ATPase activity. In Ovis aries (Sheep), this protein is Calponin-1 (CNN1).